The sequence spans 449 residues: Probable aminotransferase TAT1 (449 aa).

A compositionally biased stretch (polar residues) spans 1 to 12; sequence MNHNSNLVLPSH. Residues 1 to 20 are disordered; that stretch reads MNHNSNLVLPSHQTETQTQD.

The protein belongs to the class-I pyridoxal-phosphate-dependent aminotransferase family. Pyridoxal 5'-phosphate is required as a cofactor.

This Arabidopsis thaliana (Mouse-ear cress) protein is Probable aminotransferase TAT1.